A 113-amino-acid polypeptide reads, in one-letter code: Nucleoid-associated protein THA_1374 (113 aa).

It belongs to the YbaB/EbfC family. In terms of assembly, homodimer.

Its subcellular location is the cytoplasm. It localises to the nucleoid. Its function is as follows. Binds to DNA and alters its conformation. May be involved in regulation of gene expression, nucleoid organization and DNA protection. The chain is Nucleoid-associated protein THA_1374 from Thermosipho africanus (strain TCF52B).